We begin with the raw amino-acid sequence, 230 residues long: Orotate phosphoribosyltransferase (230 aa).

5-phospho-alpha-D-ribose 1-diphosphate-binding positions include arginine 107, lysine 108, lysine 111, histidine 113, and 133–141 (EDLTTAGGS). Residue threonine 137 participates in orotate binding.

Belongs to the purine/pyrimidine phosphoribosyltransferase family. PyrE subfamily. Homodimer. It depends on Mg(2+) as a cofactor.

The catalysed reaction is orotidine 5'-phosphate + diphosphate = orotate + 5-phospho-alpha-D-ribose 1-diphosphate. Its pathway is pyrimidine metabolism; UMP biosynthesis via de novo pathway; UMP from orotate: step 1/2. Functionally, catalyzes the transfer of a ribosyl phosphate group from 5-phosphoribose 1-diphosphate to orotate, leading to the formation of orotidine monophosphate (OMP). The polypeptide is Orotate phosphoribosyltransferase (Allorhizobium ampelinum (strain ATCC BAA-846 / DSM 112012 / S4) (Agrobacterium vitis (strain S4))).